The chain runs to 327 residues: Chlorophenol reductase (327 aa).

The first 24 residues, 1–24 (MKKTLGIILSISLAFSVLALPIFA), serve as a signal peptide directing secretion. Positions 65-110 (TYYTVVSGDFFWQIAAKHGLTIDALAKLNPQIKNVNLIFPGQKILV) constitute a LysM domain.

Cob(I)alamin serves as cofactor.

It localises to the secreted. It is found in the cell wall. The protein localises to the cell membrane. Inhibited by sulfide and to a lesser extent by nitrite. Its function is as follows. Reductive dechlorination of ortho-chlorophenols. Dechlorinates in the ortho position with respect to the hydroxyl group. The chain is Chlorophenol reductase from Desulfitobacterium hafniense (Desulfitobacterium frappieri).